The chain runs to 112 residues: UPF0102 protein TTHA0372 (112 aa).

Belongs to the UPF0102 family.

This chain is UPF0102 protein TTHA0372, found in Thermus thermophilus (strain ATCC 27634 / DSM 579 / HB8).